The primary structure comprises 913 residues: Isoleucine--tRNA ligase (913 aa).

The 'HIGH' region signature appears at 57–67; sequence PYANGDIHLGT. Glutamate 549 contacts L-isoleucyl-5'-AMP. Residues 590 to 594 carry the 'KMSKS' region motif; it reads KMSKS. Lysine 593 contacts ATP. Residues cysteine 881, cysteine 884, cysteine 901, and cysteine 904 each contribute to the Zn(2+) site.

This sequence belongs to the class-I aminoacyl-tRNA synthetase family. IleS type 1 subfamily. In terms of assembly, monomer. Zn(2+) serves as cofactor.

It is found in the cytoplasm. It catalyses the reaction tRNA(Ile) + L-isoleucine + ATP = L-isoleucyl-tRNA(Ile) + AMP + diphosphate. Its function is as follows. Catalyzes the attachment of isoleucine to tRNA(Ile). As IleRS can inadvertently accommodate and process structurally similar amino acids such as valine, to avoid such errors it has two additional distinct tRNA(Ile)-dependent editing activities. One activity is designated as 'pretransfer' editing and involves the hydrolysis of activated Val-AMP. The other activity is designated 'posttransfer' editing and involves deacylation of mischarged Val-tRNA(Ile). In Fervidobacterium nodosum (strain ATCC 35602 / DSM 5306 / Rt17-B1), this protein is Isoleucine--tRNA ligase.